Here is a 1070-residue protein sequence, read N- to C-terminus: Error-prone DNA polymerase (1070 aa).

This sequence belongs to the DNA polymerase type-C family. DnaE2 subfamily.

The protein localises to the cytoplasm. It catalyses the reaction DNA(n) + a 2'-deoxyribonucleoside 5'-triphosphate = DNA(n+1) + diphosphate. In terms of biological role, DNA polymerase involved in damage-induced mutagenesis and translesion synthesis (TLS). It is not the major replicative DNA polymerase. In Aromatoleum aromaticum (strain DSM 19018 / LMG 30748 / EbN1) (Azoarcus sp. (strain EbN1)), this protein is Error-prone DNA polymerase.